The sequence spans 541 residues: Putative apolipoprotein N-acyltransferase (541 aa).

6 helical membrane passes run 31-51, 65-85, 89-109, 144-164, 181-201, and 215-235; these read PLPA…AAHA, GWLF…VSMH, GLAA…LALF, AACW…FPWL, LLGV…LAGL, and LAAG…QFSW. In terms of domain architecture, CN hydrolase spans 248 to 511; sequence VQGNVEQSQK…AGVLPVAVQG (264 aa). Glu292 serves as the catalytic Proton acceptor. The active site involves Lys366. The Nucleophile role is filled by Cys416.

It belongs to the CN hydrolase family. Apolipoprotein N-acyltransferase subfamily.

It localises to the cell inner membrane. It catalyses the reaction N-terminal S-1,2-diacyl-sn-glyceryl-L-cysteinyl-[lipoprotein] + a glycerophospholipid = N-acyl-S-1,2-diacyl-sn-glyceryl-L-cysteinyl-[lipoprotein] + a 2-acyl-sn-glycero-3-phospholipid + H(+). The protein operates within protein modification; lipoprotein biosynthesis (N-acyl transfer). In terms of biological role, catalyzes the phospholipid dependent N-acylation of the N-terminal cysteine of apolipoprotein, the last step in lipoprotein maturation. This chain is Putative apolipoprotein N-acyltransferase, found in Bordetella parapertussis (strain 12822 / ATCC BAA-587 / NCTC 13253).